A 139-amino-acid polypeptide reads, in one-letter code: 3-hydroxyacyl-[acyl-carrier-protein] dehydratase FabZ (139 aa).

The active site involves His47.

It belongs to the thioester dehydratase family. FabZ subfamily.

Its subcellular location is the cytoplasm. It carries out the reaction a (3R)-hydroxyacyl-[ACP] = a (2E)-enoyl-[ACP] + H2O. In terms of biological role, involved in unsaturated fatty acids biosynthesis. Catalyzes the dehydration of short chain beta-hydroxyacyl-ACPs and long chain saturated and unsaturated beta-hydroxyacyl-ACPs. The polypeptide is 3-hydroxyacyl-[acyl-carrier-protein] dehydratase FabZ (Oenococcus oeni (strain ATCC BAA-331 / PSU-1)).